Consider the following 324-residue polypeptide: UDP-N-acetylenolpyruvoylglucosamine reductase (324 aa).

The 168-residue stretch at phenylalanine 36–glutamate 203 folds into the FAD-binding PCMH-type domain. Residue arginine 183 is part of the active site. Residue serine 232 is the Proton donor of the active site. Glutamate 302 is an active-site residue.

It belongs to the MurB family. The cofactor is FAD.

It is found in the cytoplasm. It carries out the reaction UDP-N-acetyl-alpha-D-muramate + NADP(+) = UDP-N-acetyl-3-O-(1-carboxyvinyl)-alpha-D-glucosamine + NADPH + H(+). Its pathway is cell wall biogenesis; peptidoglycan biosynthesis. In terms of biological role, cell wall formation. The protein is UDP-N-acetylenolpyruvoylglucosamine reductase of Rhizobium johnstonii (strain DSM 114642 / LMG 32736 / 3841) (Rhizobium leguminosarum bv. viciae).